Here is an 82-residue protein sequence, read N- to C-terminus: Small ribosomal subunit protein bS16 (82 aa).

The protein belongs to the bacterial ribosomal protein bS16 family.

In Dehalococcoides mccartyi (strain ATCC BAA-2266 / KCTC 15142 / 195) (Dehalococcoides ethenogenes (strain 195)), this protein is Small ribosomal subunit protein bS16.